We begin with the raw amino-acid sequence, 1503 residues long: Transient receptor potential cation channel subfamily M member 2 (1503 aa).

Residues 1 to 20 (MEPSALRKAGSEQEEGFEGL) are disordered. Over 1 to 752 (MEPSALRKAG…WWGQLSVDNG (752 aa)) the chain is Cytoplasmic. Thr174, Asn179, Arg302, Gly333, and Thr336 together coordinate ADP-D-ribose. Thr740 is modified (phosphothreonine). The stretch at 753–769 (LWRVTLCMLAFPLLLTG) is an intramembrane region. The Cytoplasmic segment spans residues 770–795 (LISFREKRLQDVGTPAARARAFFTAP). Residues 796–816 (VVVFHLNILSYFAFLCLFAYV) form a helical membrane-spanning segment. Residues 817 to 827 (LMVDFQPVPSW) lie on the Extracellular side of the membrane. The chain crosses the membrane as a helical span at residues 828–848 (CECAIYLWLFSLVCEEMRQLF). Glu843 and Gln846 together coordinate Ca(2+). Residues 849–867 (YDPDECGLMKKAALYFSDF) lie on the Cytoplasmic side of the membrane. The helical transmembrane segment at 868–888 (WNKLDVGAILLFVAGLTCRLI) threads the bilayer. Residue Asn869 participates in Ca(2+) binding. Topologically, residues 889–896 (PATLYPGR) are extracellular. The helical transmembrane segment at 897–917 (VILSLDFILFCLRLMHIFTIS) threads the bilayer. The Cytoplasmic portion of the chain corresponds to 918 to 929 (KTLGPKIIIVKR). A helical membrane pass occupies residues 930 to 950 (MMKDVFFFLFLLAVWVVSFGV). Residues 951–970 (AKQAILIHNERRVDWLFRGA) are Extracellular-facing. The pore-forming intramembrane region spans 971–985 (VYHSYLTIFGQIPGY). A Selectivity filter motif is present at residues 979 to 982 (FGQI). Residues 986–1022 (IDGVNFNPEHCSPNGTDPYKPKCPESDATQQRPAFPE) lie on the Extracellular side of the membrane. The cysteines at positions 996 and 1008 are disulfide-linked. Residues 1023-1044 (WLTVLLLCLYLLFTNILLLNLL) form a helical membrane-spanning segment. The Cytoplasmic segment spans residues 1045–1079 (IAMFNYTFQQVQEHTDQIWKFQRHDLIEEYHGRPA). Glu1073 contacts Ca(2+). Residues 1080–1098 (APPPFILLSHLQLFIKRVV) lie within the membrane without spanning it. The Cytoplasmic portion of the chain corresponds to 1099–1503 (LKTPAKRHKQ…KAAAEFGAHY (405 aa)). Positions 1206-1237 (EADVPTLASQKAAEEPDAEPGGRKKTEEPGDS) are disordered. Residues 1354–1498 (RWRRNEDGAI…KTLLQKAAAE (145 aa)) enclose the Nudix hydrolase domain. ADP-D-ribose contacts are provided by Leu1381 and Ser1382. The Nudix box motif lies at 1390–1411 (GSREPGEMLPRKLKRILRQEHW). 4 residues coordinate ADP-D-ribose: Asp1431, Arg1433, Tyr1485, and Asn1487.

The protein belongs to the transient receptor (TC 1.A.4) family. LTrpC subfamily. TRPM2 sub-subfamily. Homotetramer. Isoform 1 can interact with isoform 3. This interaction decreases Ca(2+) influx through isoform 1 and suppresses susceptibility to oxidative stress-induced cell death. Post-translationally, phosphorylation of TRPM2 at Thr-740 by protein kinase C (PKC) counteracts the effect of cytosolic Ca(2+) and elevates the temperature threshold. Highly expressed in brain and peripheral blood cells, such as neutrophils. Also detected in bone marrow, spleen, heart, liver and lung. Isoform 2 is found in neutrophil granulocytes.

The protein localises to the cell membrane. Its subcellular location is the perikaryon. It localises to the cell projection. It is found in the cytoplasmic vesicle. The protein resides in the lysosome. It catalyses the reaction Ca(2+)(in) = Ca(2+)(out). The catalysed reaction is Na(+)(in) = Na(+)(out). Activated by intracellular ADP-ribose, beta-NAD (NAD(+)) and similar compounds, and by oxidative stress caused by reactive oxygen or nitrogen species. Ca(2+) and PI(4,5)P2 are required for channel opening by ADP-ribose. Activation by ADP-ribose and beta-NAD is strongly increased by moderate heat (35 to 40 degrees Celsius). Likewise, reactive oxygen species lower the threshold for activation by moderate heat (37 degrees Celsius). Activated by moderate heat (35 to 40 degrees Celsius). Inactivated by exposure to extracellular pH between 4.0 and 6.5; irreversibly inactivated when open channels are exposed to extracellular pH between 4.0 and 6.5, while pre-exposure of closed channels to extracellular pH 5.5 gives rise to currents that rapidly inactivate, but protects against irreversible inactivation. Inactivated by intracellular ATP. Activated by arachidonic acid. Inhibited by 2-aminoethyl diphenylborinate (2-APB). Functionally, nonselective, voltage-independent cation channel that mediates Na(+) and Ca(2+) influx, leading to increased cytoplasmic Ca(2+) levels. Functions as a ligand-gated ion channel, gated by intracellular adenosine diphosphate ribose (ADP-ribose), Ca(2+), warm temperature, and oxidative stress. The precise physiological activators are under debate; the true, physiological activators may be ADP-ribose and ADP-ribose-2'-phosphate. Binding of ADP-ribose to the cytoplasmic Nudix domain causes a conformation change; the channel is primed but still requires Ca(2+) binding to trigger channel opening. Extracellular Ca(2+) passes through the channel and increases channel activity. Contributes to Ca(2+) release from intracellular stores in response to ADP-ribose. Plays a role in numerous processes that involve signaling via intracellular Ca(2+) levels. Besides, mediates the release of lysosomal Zn(2+) stores in response to reactive oxygen species, leading to increased cytosolic Zn(2+) levels. Plays a role in mediating behavorial and physiological responses to moderate heat and thereby contributes to body temperature homeostasis. Plays a role in insulin secretion, a process that requires increased cytoplasmic Ca(2+) levels. Required for normal IFNG and cytokine secretion and normal innate immune immunity in response to bacterial infection. Required for normal phagocytosis and cytokine release by macrophages exposed to zymosan (in vitro). Plays a role in dendritic cell differentiation and maturation, and in dendritic cell chemotaxis via its role in regulating cytoplasmic Ca(2+) levels. Plays a role in the regulation of the reorganization of the actin cytoskeleton and filopodia formation in response to reactive oxygen species via its role in increasing cytoplasmic Ca(2+) and Zn(2+) levels. Confers susceptibility to cell death following oxidative stress. In terms of biological role, lacks cation channel activity. Does not mediate cation transport in response to oxidative stress or ADP-ribose. Lacks cation channel activity and negatively regulates the channel activity of isoform 1. Negatively regulates susceptibility to cell death in reposponse to oxidative stress. The polypeptide is Transient receptor potential cation channel subfamily M member 2 (TRPM2) (Homo sapiens (Human)).